The chain runs to 271 residues: Extracellular metalloprotease TRV_06892 (271 aa).

An N-terminal signal peptide occupies residues 1-19 (MRFSVLLTGLAAAGSIATA). N-linked (GlcNAc...) asparagine glycosylation is present at N136. Zn(2+) is bound at residue H185. E186 is a catalytic residue. Zn(2+) is bound at residue H189. N200 carries an N-linked (GlcNAc...) asparagine glycan. C222 and C248 are oxidised to a cystine.

Belongs to the peptidase M43B family.

It is found in the secreted. Its function is as follows. Secreted metalloproteinase that allows assimilation of proteinaceous substrates. Plays a pivotal role as a pathogenicity determinant during infections and contributes to the ability of the pathogen to persist within the mammalian host. This chain is Extracellular metalloprotease TRV_06892, found in Trichophyton verrucosum (strain HKI 0517).